A 367-amino-acid chain; its full sequence is MAEEMEPLLEPTEVFMDLWSMLPYSMQQLPLPEDHSNWQELSPLEPSDPPPPPPPPPLPLAAAAPPPLNPPTPPRAAPSPVVPSTEDYGGDFDFRVGFVEAGTAKSVTCTYSPVLNKVYCRLAKPCPVQVRVGVAPPPGSSLRAVAVYKKSEHVAEVVRRCPHHERCGGGTDGLAPAQHLIRVEGNPQARYHDDETTKRHSVVVPYEPPEVGSDCTTVLYNFMCNSSCMGGMNRRPILTILTLEGPGGQLLGRRCFEVRVCACPGRDRKIEEENFRKRGGAGGVAKRAMSPPTEAPEPPKKRVLNPDNEIFYLQVRGRRRYEMLKEINEALQLAEGGSAPRPSKGRRVKVEGPQPSCGKKLLQKGSD.

A transcription activation (acidic) region spans residues 1–30 (MAEEMEPLLEPTEVFMDLWSMLPYSMQQLP). The interval 30 to 84 (PLPEDHSNWQELSPLEPSDPPPPPPPPPLPLAAAAPPPLNPPTPPRAAPSPVVPS) is disordered. A compositionally biased stretch (pro residues) spans 46-81 (PSDPPPPPPPPPLPLAAAAPPPLNPPTPPRAAPSPV). The DNA-binding element occupies 87-278 (DYGGDFDFRV…KIEEENFRKR (192 aa)). Zn(2+)-binding residues include cysteine 161, histidine 164, cysteine 224, and cysteine 228. An interaction with DNA region spans residues 259 to 266 (RVCACPGR). Disordered regions lie at residues 275 to 303 (FRKR…KKRV) and 333 to 367 (LAEG…KGSD). Residues 286-302 (KRAMSPPTEAPEPPKKR) carry the Bipartite nuclear localization signal motif. An oligomerization region spans residues 308–339 (NEIFYLQVRGRRRYEMLKEINEALQLAEGGSA). Positions 322–333 (EMLKEINEALQL) match the Nuclear export signal motif. The segment at 347-364 (RVKVEGPQPSCGKKLLQK) is basic (repression of DNA-binding).

The protein belongs to the p53 family. In terms of assembly, binds DNA as a homotetramer. Zn(2+) serves as cofactor.

Its subcellular location is the cytoplasm. It is found in the nucleus. Functionally, multifunctional transcription factor that induces cell cycle arrest, DNA repair or apoptosis upon binding to its target DNA sequence. Acts as a tumor suppressor in many tumor types; induces growth arrest or apoptosis depending on the physiological circumstances and cell type. Negatively regulates cell division by controlling expression of a set of genes required for this process. One of the activated genes is an inhibitor of cyclin-dependent kinases. Apoptosis induction seems to be mediated either by stimulation of BAX and FAS antigen expression, or by repression of Bcl-2 expression. The protein is Cellular tumor antigen p53 (TP53) of Gallus gallus (Chicken).